The primary structure comprises 134 residues: Large-conductance mechanosensitive channel (134 aa).

2 helical membrane passes run 16–36 and 84–104; these read VIDL…VTAL and INTL…IKVI.

This sequence belongs to the MscL family. Homopentamer.

It is found in the cell inner membrane. Functionally, channel that opens in response to stretch forces in the membrane lipid bilayer. May participate in the regulation of osmotic pressure changes within the cell. This is Large-conductance mechanosensitive channel from Stenotrophomonas maltophilia (strain R551-3).